We begin with the raw amino-acid sequence, 82 residues long: Large ribosomal subunit protein bL31 (82 aa).

The Zn(2+) site is built by C16, C18, C37, and C40.

Belongs to the bacterial ribosomal protein bL31 family. Type A subfamily. As to quaternary structure, part of the 50S ribosomal subunit. It depends on Zn(2+) as a cofactor.

Its function is as follows. Binds the 23S rRNA. This chain is Large ribosomal subunit protein bL31, found in Blochmanniella pennsylvanica (strain BPEN).